The sequence spans 484 residues: Dual specificity protein kinase CLK1 (484 aa).

The disordered stretch occupies residues methionine 1–lysine 42. Residues serine 26–histidine 35 are compositionally biased toward basic residues. Serine 61 carries the post-translational modification Phosphoserine. A disordered region spans residues aspartate 79–glutamate 146. The segment covering proline 86 to tyrosine 97 has biased composition (basic and acidic residues). A compositionally biased stretch (low complexity) spans histidine 100–serine 112. Basic residues predominate over residues tyrosine 113–threonine 138. Phosphothreonine is present on threonine 138. Serine 140 is subject to Phosphoserine. The Protein kinase domain maps to tyrosine 161–phenylalanine 477. ATP is bound by residues leucine 167–valine 175 and lysine 191. The Proton acceptor role is filled by aspartate 288.

It belongs to the protein kinase superfamily. CMGC Ser/Thr protein kinase family. Lammer subfamily. In terms of assembly, interacts with PPIG and UBL5. Post-translationally, autophosphorylates on all three types of residues. Endothelial cells.

The protein localises to the nucleus. The catalysed reaction is L-seryl-[protein] + ATP = O-phospho-L-seryl-[protein] + ADP + H(+). The enzyme catalyses L-threonyl-[protein] + ATP = O-phospho-L-threonyl-[protein] + ADP + H(+). It catalyses the reaction L-tyrosyl-[protein] + ATP = O-phospho-L-tyrosyl-[protein] + ADP + H(+). Its activity is regulated as follows. Regulates splicing of its own pre-mRNA according to its kinase activity; increased expression of the catalytically active form influences splicing to generate the catalytically inactive splicing variant lacking the kinase domain. Leucettine L41 inhibits its kinase activity and affects the regulation of alternative splicing mediated by phosphorylation of SR proteins. Functionally, dual specificity kinase acting on both serine/threonine and tyrosine-containing substrates. Phosphorylates serine- and arginine-rich (SR) proteins of the spliceosomal complex and may be a constituent of a network of regulatory mechanisms that enable SR proteins to control RNA splicing. Phosphorylates: SRSF1, SRSF3 and PTPN1. Regulates the alternative splicing of tissue factor (F3) pre-mRNA in endothelial cells. This Homo sapiens (Human) protein is Dual specificity protein kinase CLK1.